A 406-amino-acid polypeptide reads, in one-letter code: Peptidase T (406 aa).

His-78 provides a ligand contact to Zn(2+). Asp-80 is a catalytic residue. Asp-139 contacts Zn(2+). Glu-173 acts as the Proton acceptor in catalysis. Positions 174, 196, and 378 each coordinate Zn(2+).

Belongs to the peptidase M20B family. It depends on Zn(2+) as a cofactor.

It localises to the cytoplasm. It catalyses the reaction Release of the N-terminal residue from a tripeptide.. In terms of biological role, cleaves the N-terminal amino acid of tripeptides. The sequence is that of Peptidase T from Clostridium perfringens (strain 13 / Type A).